Consider the following 240-residue polypeptide: Uridylate kinase (240 aa).

14–17 (KLSG) is an ATP binding site. Gly-56 lines the UMP pocket. ATP is bound by residues Gly-57 and Arg-61. Residues Asp-76 and 137 to 144 (TGNPFFTT) contribute to the UMP site. The ATP site is built by Thr-164, Tyr-170, and Asp-173.

The protein belongs to the UMP kinase family. In terms of assembly, homohexamer.

It localises to the cytoplasm. The enzyme catalyses UMP + ATP = UDP + ADP. It participates in pyrimidine metabolism; CTP biosynthesis via de novo pathway; UDP from UMP (UMPK route): step 1/1. Its activity is regulated as follows. Inhibited by UTP. Catalyzes the reversible phosphorylation of UMP to UDP. In Paracidovorax citrulli (strain AAC00-1) (Acidovorax citrulli), this protein is Uridylate kinase.